A 230-amino-acid polypeptide reads, in one-letter code: Nicotinamide riboside kinase (230 aa).

Residue 12–20 (GASCSGKST) coordinates ATP. 2 residues coordinate Mg(2+): Ser-19 and Asp-38. The active-site Proton acceptor is Asp-38. Substrate is bound by residues 38-41 (DDFY) and 56-57 (WD). Arg-153 contacts ATP. Substrate is bound by residues Arg-154 and 159-160 (GY). ATP contacts are provided by residues 157–159 (RTG) and 203–205 (RIQ).

This sequence belongs to the uridine kinase family. NRK subfamily.

It catalyses the reaction beta-nicotinamide D-riboside + ATP = beta-nicotinamide D-ribonucleotide + ADP + H(+). The catalysed reaction is beta-D-ribosylnicotinate + ATP = nicotinate beta-D-ribonucleotide + ADP + H(+). It participates in cofactor biosynthesis; NAD(+) biosynthesis. Functionally, catalyzes the phosphorylation of nicotinamide riboside (NR) and nicotinic acid riboside (NaR) to form nicotinamide mononucleotide (NMN) and nicotinic acid mononucleotide (NaMN). This Schizosaccharomyces pombe (strain 972 / ATCC 24843) (Fission yeast) protein is Nicotinamide riboside kinase (nrk1).